The sequence spans 75 residues: Large ribosomal subunit protein bL31 (75 aa).

The protein belongs to the bacterial ribosomal protein bL31 family. Type A subfamily. As to quaternary structure, part of the 50S ribosomal subunit.

Its function is as follows. Binds the 23S rRNA. The chain is Large ribosomal subunit protein bL31 from Chlorobaculum tepidum (strain ATCC 49652 / DSM 12025 / NBRC 103806 / TLS) (Chlorobium tepidum).